Here is a 147-residue protein sequence, read N- to C-terminus: Hemoglobin subunit beta-1 (147 aa).

Position 2 is an N-acetylserine (Ser2). Positions 3–147 (FLSAEEKGLV…VASALAHRYH (145 aa)) constitute a Globin domain. The residue at position 18 (Lys18) is an N6-succinyllysine. Phosphoserine is present on residues Ser45 and Ser51. Lys60 carries the post-translational modification N6-succinyllysine. Residues His64 and His93 each coordinate heme b. Position 105 is an asymmetric dimethylarginine (Arg105).

This sequence belongs to the globin family. In terms of assembly, heterotetramer of two alpha chains and two beta chains. In terms of tissue distribution, red blood cells.

Functionally, involved in oxygen transport from the lung to the various peripheral tissues. This Panthera onca (Jaguar) protein is Hemoglobin subunit beta-1 (HBB1).